A 214-amino-acid chain; its full sequence is Charged multivesicular body protein 2b (214 aa).

Residues 25 to 55 (QRTITRDRAALEKQERQLELEIKKMAKTGNK) are a coiled coil. The interval 179–201 (AKAPSAARGLPSASTSKASTISD) is disordered. Residues 190-199 (SASTSKASTI) show a composition bias toward polar residues. Residues 202–212 (EEIERQLKALG) carry the MIT-interacting motif motif.

The protein belongs to the SNF7 family. In terms of assembly, probable core component of the endosomal sorting required for transport complex III (ESCRT-III). ESCRT-III components are thought to multimerize to form a flat lattice on the perimeter membrane of the endosome.

The protein resides in the cytoplasm. Its subcellular location is the cytosol. It is found in the late endosome membrane. Functionally, probable core component of the endosomal sorting required for transport complex III (ESCRT-III) which is involved in multivesicular bodies (MVBs) formation and sorting of endosomal cargo proteins into MVBs. MVBs contain intraluminal vesicles (ILVs) that are generated by invagination and scission from the limiting membrane of the endosome and mostly are delivered to lysosomes enabling degradation of membrane proteins, such as stimulated growth factor receptors, lysosomal enzymes and lipids. The chain is Charged multivesicular body protein 2b (CHMP2B) from Gallus gallus (Chicken).